We begin with the raw amino-acid sequence, 541 residues long: 2-succinyl-5-enolpyruvyl-6-hydroxy-3-cyclohexene-1-carboxylate synthase (541 aa).

It belongs to the TPP enzyme family. MenD subfamily. In terms of assembly, homodimer. Mg(2+) serves as cofactor. The cofactor is Mn(2+). Thiamine diphosphate is required as a cofactor.

The enzyme catalyses isochorismate + 2-oxoglutarate + H(+) = 5-enolpyruvoyl-6-hydroxy-2-succinyl-cyclohex-3-ene-1-carboxylate + CO2. The protein operates within quinol/quinone metabolism; 1,4-dihydroxy-2-naphthoate biosynthesis; 1,4-dihydroxy-2-naphthoate from chorismate: step 2/7. It participates in quinol/quinone metabolism; menaquinone biosynthesis. Functionally, catalyzes the thiamine diphosphate-dependent decarboxylation of 2-oxoglutarate and the subsequent addition of the resulting succinic semialdehyde-thiamine pyrophosphate anion to isochorismate to yield 2-succinyl-5-enolpyruvyl-6-hydroxy-3-cyclohexene-1-carboxylate (SEPHCHC). The chain is 2-succinyl-5-enolpyruvyl-6-hydroxy-3-cyclohexene-1-carboxylate synthase from Rhodococcus jostii (strain RHA1).